The sequence spans 404 residues: Deoxyguanosinetriphosphate triphosphohydrolase-like protein 1 (404 aa).

An HD domain is found at 75–219 (RLTHSIEVAQ…AAIADDIAYN (145 aa)).

Belongs to the dGTPase family. Type 2 subfamily.

The sequence is that of Deoxyguanosinetriphosphate triphosphohydrolase-like protein 1 from Mesorhizobium japonicum (strain LMG 29417 / CECT 9101 / MAFF 303099) (Mesorhizobium loti (strain MAFF 303099)).